A 365-amino-acid chain; its full sequence is Galactoside alpha-(1,2)-fucosyltransferase 1 (365 aa).

Topologically, residues 1 to 8 are cytoplasmic; sequence MWPLSHRH. Residues 9–25 traverse the membrane as a helical; Signal-anchor for type II membrane protein segment; sequence LCLAFLLVCVLSAISFF. The Lumenal segment spans residues 26–365; sequence LHIYQDSIRH…LSPLWTLAEP (340 aa). 3 N-linked (GlcNAc...) asparagine glycosylation sites follow: N65, N301, and N327.

The protein belongs to the glycosyltransferase 11 family.

It is found in the golgi apparatus. Its subcellular location is the golgi stack membrane. It carries out the reaction a beta-D-galactosyl-(1-&gt;4)-N-acetyl-beta-D-glucosaminyl derivative + GDP-beta-L-fucose = an alpha-L-Fuc-(1-&gt;2)-beta-D-Gal-(1-&gt;4)-beta-D-GlcNAc derivative + GDP + H(+). The catalysed reaction is a ganglioside GA1 + GDP-beta-L-fucose = a ganglioside Fuc-GA1 + GDP + H(+). It catalyses the reaction a beta-D-Gal-(1-&gt;3)-beta-D-GlcNAc-(1-&gt;3)-beta-D-Gal-(1-&gt;4)-beta-D-Glc-(1&lt;-&gt;1')-Cer(d18:1(4E)) + GDP-beta-L-fucose = alpha-L-fucosyl-(1-&gt;2)- beta-D-galactosyl-(1-&gt;3)-N-acetyl-beta-D-glucosaminyl-(1-&gt;3)-beta-D-galactosyl-(1-&gt;4)-beta-D-glucosyl-(1&lt;-&gt;1')-N-acylsphing-4-enine + GDP + H(+). The enzyme catalyses a neolactoside nLc4Cer(d18:1(4E)) + GDP-beta-L-fucose = a neolactoside IV(2)-alpha-Fuc-nLc4Cer(d18:1(4E)) + GDP + H(+). It carries out the reaction a ganglioside GM1 + GDP-beta-L-fucose = a ganglioside Fuc-GM1 + GDP + H(+). The catalysed reaction is beta-D-galactosyl-(1-&gt;3)-N-acetyl-D-galactosamine + GDP-beta-L-fucose = alpha-L-fucosyl-(1-&gt;2)-beta-D-galactosyl-(1-&gt;3)-N-acetyl-D-galactosamine + GDP + H(+). Its pathway is protein modification; protein glycosylation. Its function is as follows. Catalyzes the transfer of L-fucose, from a guanosine diphosphate-beta-L-fucose, to the terminal galactose residue of glycoconjugates through an alpha(1,2) linkage leading to H antigen synthesis that is an intermediate substrate in the synthesis of ABO blood group antigens. H antigen is essential for maturation of the glomerular layer of the main olfactory bulb, in cell migration and early cell-cell contacts during tumor associated angiogenesis. Preferentially fucosylates soluble lactose and to a lesser extent fucosylates glycolipids gangliosides GA1 and GM1a. The polypeptide is Galactoside alpha-(1,2)-fucosyltransferase 1 (Mico humeralifer (Black and white tassel-ear marmoset)).